Consider the following 156-residue polypeptide: Small ribosomal subunit protein uS7 (156 aa).

Belongs to the universal ribosomal protein uS7 family. As to quaternary structure, part of the 30S ribosomal subunit. Contacts proteins S9 and S11.

In terms of biological role, one of the primary rRNA binding proteins, it binds directly to 16S rRNA where it nucleates assembly of the head domain of the 30S subunit. Is located at the subunit interface close to the decoding center, probably blocks exit of the E-site tRNA. The polypeptide is Small ribosomal subunit protein uS7 (Bacillus licheniformis (strain ATCC 14580 / DSM 13 / JCM 2505 / CCUG 7422 / NBRC 12200 / NCIMB 9375 / NCTC 10341 / NRRL NRS-1264 / Gibson 46)).